We begin with the raw amino-acid sequence, 800 residues long: Phenylalanine--tRNA ligase beta subunit (800 aa).

In terms of domain architecture, tRNA-binding spans 39–154; that stretch reads TKDIKKLVVG…EAVKPGTDAL (116 aa). The region spanning 408–483 is the B5 domain; sequence SFVTPIKITA…RIYGYDDIPS (76 aa). The Mg(2+) site is built by Asp461, Asp467, Glu470, and Glu471. Positions 708-800 constitute an FDX-ACB domain; sequence PRFPGVTRDI…ALKKHGAIIR (93 aa).

Belongs to the phenylalanyl-tRNA synthetase beta subunit family. Type 1 subfamily. In terms of assembly, tetramer of two alpha and two beta subunits. Mg(2+) is required as a cofactor.

Its subcellular location is the cytoplasm. The catalysed reaction is tRNA(Phe) + L-phenylalanine + ATP = L-phenylalanyl-tRNA(Phe) + AMP + diphosphate + H(+). The protein is Phenylalanine--tRNA ligase beta subunit of Staphylococcus epidermidis (strain ATCC 35984 / DSM 28319 / BCRC 17069 / CCUG 31568 / BM 3577 / RP62A).